The sequence spans 372 residues: NAD(P)H-quinone oxidoreductase subunit 1 (372 aa).

Transmembrane regions (helical) follow at residues 27-47 (IIWLPLPMLLVLVSAVVGVLV), 97-117 (ILFTAGPILVLVPVILSWLIV), 128-148 (VGIGIFLWIALSSIQPIGLLM), 176-196 (LALSVLAIVLMTNSLSTIDIV), 204-224 (ILSWNIWRQPVGFIIFWICAL), 266-286 (ILSALLVSILYLGGWGFPIPV), 308-328 (SIGIIMTVLKAYLLVFVAILL), and 347-367 (FLLPISLANLLVTAGLKLAFP).

This sequence belongs to the complex I subunit 1 family. In terms of assembly, NDH-1 is composed of at least 11 different subunits.

It localises to the cellular thylakoid membrane. The enzyme catalyses a plastoquinone + NADH + (n+1) H(+)(in) = a plastoquinol + NAD(+) + n H(+)(out). It carries out the reaction a plastoquinone + NADPH + (n+1) H(+)(in) = a plastoquinol + NADP(+) + n H(+)(out). NDH-1 shuttles electrons from an unknown electron donor, via FMN and iron-sulfur (Fe-S) centers, to quinones in the respiratory and/or the photosynthetic chain. The immediate electron acceptor for the enzyme in this species is believed to be plastoquinone. Couples the redox reaction to proton translocation, and thus conserves the redox energy in a proton gradient. The polypeptide is NAD(P)H-quinone oxidoreductase subunit 1 (Prochlorococcus marinus subsp. pastoris (strain CCMP1986 / NIES-2087 / MED4)).